Consider the following 1115-residue polypeptide: Integrin alpha-PS3 (1115 aa).

The N-terminal stretch at 1–24 (MNAESTMFPHIFLALLALISHIEA) is a signal peptide. Over 25–1054 (FNFMPRPSRV…PNIISKHQET (1030 aa)) the chain is Extracellular. FG-GAP repeat units lie at residues 39 to 99 (KHLK…VCSP), 113 to 174 (SEYT…STPQ), 193 to 246 (DNGN…VDNP), 278 to 335 (IPTP…GKSI), 336 to 397 (HKYH…FNFE), 398 to 453 (RQIL…GLRD), and 460 to 522 (DAPS…SESR). Residues Asn46, Asn82, and Asn166 are each glycosylated (N-linked (GlcNAc...) asparagine). A glycan (N-linked (GlcNAc...) asparagine) is linked at Asn438. Asn696, Asn845, Asn868, and Asn964 each carry an N-linked (GlcNAc...) asparagine glycan. A helical membrane pass occupies residues 1055–1075 (GLPIWIIIVSVIGGLLLLSAI). At 1076–1115 (SYLLYKFGFFNRTKKDELDRLVQQNPVEPEAENLNSGGNN) the chain is on the cytoplasmic side.

This sequence belongs to the integrin alpha chain family. As to quaternary structure, heterodimer of an alpha and a beta subunit. The alpha subunit is composed of a heavy and a light chain linked by a disulfide bond. Interacts with mys/beta-PS and Itgbn. Expressed in embryonic and larval hemocytes (at protein level). Expressed in tissues undergoing invagination, tissue movement and morphogenesis such as salivary gland, trachea, midgut endoderm, dorsal vessel, midline of the ventral nerve cord, amnioserosa and the amnioproctodeal invagination. Expressed in the mushroom body neuropil, brain areas that contain mushroom body processes in synaptic contact with other neurons. In egg chambers, expressed in border cells, in stretch cells and in dorsal appendage primordia.

It localises to the apical cell membrane. Its subcellular location is the lateral cell membrane. The protein localises to the cytoplasm. Integrin alpha-PS3/beta-PS is a receptor for laminin. Also binds to wb. Important during embryogenesis for the development of the trachea, dorsal vessel and salivary gland, as well as for dorsal closure. Required for short-term memory processes. Minor involvement in the establishment of the oocyte anterior-posterior length. Plays a role in timely border cell migration during oogenesis, probably mediated by JNK signaling. Integrin alpha-PS3/Itgbn is required for effective phagocytosis of apoptotic cells during embryonic development and for the phagocytic elimination of S.aureus by mediating the binding of S.aureus peptidoglycan to larval hemocytes, which probably activates a signaling pathway involving Rac1 and Rac2. Integrin alpha-PS3/Itgbn also regulates Fak activity during neuromuscular junction (NMJ) growth and is required for its activation in presynapsis of NMJs. Seems to be dispensable for major morphogenetic processes. The polypeptide is Integrin alpha-PS3 (scb) (Drosophila melanogaster (Fruit fly)).